The following is a 319-amino-acid chain: N-acyl-aromatic-L-amino acid amidohydrolase (carboxylate-forming) (319 aa).

The hydrolytic domain stretch occupies residues 1–210 (MCSLPVPREP…TVLDFIELFN (210 aa)). 2 residues coordinate Zn(2+): histidine 21 and glutamate 24. Substrate is bound by residues arginine 63 and 70-71 (NR). Histidine 116 contributes to the Zn(2+) binding site. The substrate site is built by glutamate 178 and tyrosine 288. The tract at residues 211 to 318 (QGTAFPAFEM…PALTPAPSPA (108 aa)) is shielding domain.

The protein belongs to the AspA/AstE family. Aspartoacylase subfamily. In terms of assembly, exists as a mixture of homodimers and homotetramer, both catalytically active. (Microbial infection) Interacts with hepatitis C virus/HCV core protein. Zn(2+) serves as cofactor.

Its subcellular location is the apical cell membrane. The protein localises to the cytoplasm. The catalysed reaction is an N-acyl-aromatic L-alpha-amino acid + H2O = an aromatic L-alpha-amino acid + a carboxylate. It catalyses the reaction an N-acetyl-L-cysteine-S-conjugate + H2O = an S-substituted L-cysteine + acetate. In terms of biological role, plays an important role in deacetylating mercapturic acids in kidney proximal tubules. Also acts on N-acetyl-aromatic amino acids. In Homo sapiens (Human), this protein is N-acyl-aromatic-L-amino acid amidohydrolase (carboxylate-forming) (ACY3).